The primary structure comprises 380 residues: Alkaline protease (380 aa).

The first 27 residues, 1–27, serve as a signal peptide directing secretion; it reads MKKPLGKIVASTALLISVAFSSSIASA. Residues 28–112 constitute a propeptide that is removed on maturation; the sequence is AEEAKEKYLI…EEDAEVTTMA (85 aa). One can recognise an Inhibitor I9 domain in the interval 34-111; the sequence is KYLIGFNEQE…IEEDAEVTTM (78 aa). Q113 lines the Ca(2+) pocket. A Peptidase S8 domain is found at 116-379; sequence PWGISRVQAP…SGLVNAEAAT (264 aa). D143 acts as the Charge relay system in catalysis. D151 is a Ca(2+) binding site. H173 serves as the catalytic Charge relay system. Ca(2+)-binding residues include L184, N186, I188, V190, A274, Y276, and A279. S326 acts as the Charge relay system in catalysis.

Belongs to the peptidase S8 family. The cofactor is Ca(2+).

It localises to the secreted. The polypeptide is Alkaline protease (Alkalihalobacillus alcalophilus (Bacillus alcalophilus)).